The chain runs to 213 residues: Urease accessory protein UreG (213 aa).

Gly-17–Thr-24 provides a ligand contact to GTP.

Belongs to the SIMIBI class G3E GTPase family. UreG subfamily. As to quaternary structure, homodimer. UreD, UreF and UreG form a complex that acts as a GTP-hydrolysis-dependent molecular chaperone, activating the urease apoprotein by helping to assemble the nickel containing metallocenter of UreC. The UreE protein probably delivers the nickel.

It localises to the cytoplasm. Facilitates the functional incorporation of the urease nickel metallocenter. This process requires GTP hydrolysis, probably effectuated by UreG. The sequence is that of Urease accessory protein UreG from Delftia acidovorans (strain DSM 14801 / SPH-1).